Reading from the N-terminus, the 575-residue chain is 5-aminolevulinate synthase, mitochondrial (575 aa).

Residues 1–55 (MESITRVSMSVCPFVKSSSAQALRQLSKNSALTSQARQCPFMGAALNAKESTRSY) constitute a mitochondrion transit peptide. Arg-124, Ser-237, and Lys-256 together coordinate substrate. Pyridoxal 5'-phosphate-binding residues include Ser-289, His-317, and Thr-361. Lys-364 is a catalytic residue. Residue Lys-364 is modified to N6-(pyridoxal phosphate)lysine. Thr-393 and Thr-394 together coordinate pyridoxal 5'-phosphate. Thr-479 is a substrate binding site.

It belongs to the class-II pyridoxal-phosphate-dependent aminotransferase family. As to quaternary structure, homodimer. Pyridoxal 5'-phosphate is required as a cofactor.

It localises to the mitochondrion matrix. The enzyme catalyses succinyl-CoA + glycine + H(+) = 5-aminolevulinate + CO2 + CoA. It participates in porphyrin-containing compound metabolism; protoporphyrin-IX biosynthesis; 5-aminolevulinate from glycine: step 1/1. Its function is as follows. Catalyzes the synthesis of 5-aminolevulinate (ALA) from succinyl-CoA and glycine, the first and rate-limiting step in heme biosynthesis. This chain is 5-aminolevulinate synthase, mitochondrial (HEM1), found in Debaryomyces hansenii (strain ATCC 36239 / CBS 767 / BCRC 21394 / JCM 1990 / NBRC 0083 / IGC 2968) (Yeast).